A 375-amino-acid chain; its full sequence is Mitogen-activated protein kinase 1 (375 aa).

The Protein kinase domain maps to 43–329; sequence RPPIMPIGRG…VEEALAHPYL (287 aa). Residues 49–57 and Lys-72 each bind ATP; that span reads IGRGAYGIV. Asp-169 (proton acceptor) is an active-site residue. The residue at position 201 (Thr-201) is a Phosphothreonine. The TXY motif lies at 201 to 203; it reads TEY. A Phosphotyrosine modification is found at Tyr-203. Thr-206 is modified (phosphothreonine).

This sequence belongs to the protein kinase superfamily. CMGC Ser/Thr protein kinase family. MAP kinase subfamily. Requires Mg(2+) as cofactor. Post-translationally, activated by wounding and UV-C in a cultivar-dependent manner; phosphorylated in cv. Pungchon but not in cv. Subicho.

It catalyses the reaction L-seryl-[protein] + ATP = O-phospho-L-seryl-[protein] + ADP + H(+). The enzyme catalyses L-threonyl-[protein] + ATP = O-phospho-L-threonyl-[protein] + ADP + H(+). Its activity is regulated as follows. Activated by threonine and tyrosine phosphorylation. Functionally, stress-inducible protein kinase involved in oxidative stress-mediated and innate immune MAP kinase signaling cascades. In Capsicum annuum (Capsicum pepper), this protein is Mitogen-activated protein kinase 1.